Consider the following 184-residue polypeptide: Threonylcarbamoyl-AMP synthase (184 aa).

Residues 1–184 (MNNLENIVEQ…IFTQHIFRQG (184 aa)) enclose the YrdC-like domain.

It belongs to the SUA5 family. TsaC subfamily.

The protein resides in the cytoplasm. The enzyme catalyses L-threonine + hydrogencarbonate + ATP = L-threonylcarbamoyladenylate + diphosphate + H2O. Required for the formation of a threonylcarbamoyl group on adenosine at position 37 (t(6)A37) in tRNAs that read codons beginning with adenine. Catalyzes the conversion of L-threonine, HCO(3)(-)/CO(2) and ATP to give threonylcarbamoyl-AMP (TC-AMP) as the acyladenylate intermediate, with the release of diphosphate. The chain is Threonylcarbamoyl-AMP synthase from Actinobacillus pleuropneumoniae serotype 7 (strain AP76).